The primary structure comprises 115 residues: SPbeta prophage-derived uncharacterized protein YoqS (115 aa).

The sequence is that of SPbeta prophage-derived uncharacterized protein YoqS (yoqS) from Bacillus subtilis (strain 168).